The chain runs to 226 residues: Acyl-protein thioesterase 1 homolog 1 (226 aa).

Active-site charge relay system residues include S121, D174, and H206.

Belongs to the AB hydrolase superfamily. AB hydrolase 2 family.

The protein resides in the cytoplasm. The protein localises to the nucleus. It carries out the reaction S-hexadecanoyl-L-cysteinyl-[protein] + H2O = L-cysteinyl-[protein] + hexadecanoate + H(+). In terms of biological role, hydrolyzes fatty acids from S-acylated cysteine residues in proteins with a strong preference for palmitoylated G-alpha proteins over other acyl substrates. Mediates the deacylation of G-alpha proteins such as GPA1 in vivo, but has weak or no activity toward palmitoylated Ras proteins. Has weak lysophospholipase activity in vitro; however such activity may not exist in vivo. The polypeptide is Acyl-protein thioesterase 1 homolog 1 (Dictyostelium discoideum (Social amoeba)).